The primary structure comprises 581 residues: Phosphatidylinositol N-acetylglucosaminyltransferase subunit Q (581 aa).

5 consecutive transmembrane segments (helical) span residues 276–298 (ANMLVSVLLDVALGLLLLSWLHS), 344–366 (LGRFFLYHIHLWISYIHLMSPFI), 381–403 (LTVALSIFSDIIALLTFHIYCFY), 446–468 (LFIGTLLFTILVFLLPTTALYYL), and 478–500 (ITVQGLIHLLVDLINSLPLYSLG).

This sequence belongs to the PIGQ family. In terms of assembly, component of the glycosylphosphatidylinositol-N-acetylglucosaminyltransferase (GPI-GnT) complex composed at least by PIGA, PIGC, PIGH, PIGP, PIGQ, PIGY and DPM2. Interacts with PIGA, PIGH and PIGC.

The protein localises to the membrane. It participates in glycolipid biosynthesis; glycosylphosphatidylinositol-anchor biosynthesis. Its function is as follows. Part of the glycosylphosphatidylinositol-N-acetylglucosaminyltransferase (GPI-GnT) complex that catalyzes the transfer of N-acetylglucosamine from UDP-N-acetylglucosamine to phosphatidylinositol and participates in the first step of GPI biosynthesis. The polypeptide is Phosphatidylinositol N-acetylglucosaminyltransferase subunit Q (Mus musculus (Mouse)).